The following is a 740-amino-acid chain: MEQTYEYAWIIPFIPLPVPMLIGAGLILFPTATKSFRRMWAFQSVLLLSIVMIFSIYLSIQQINSSSFYQYVWSWIINNDFSLDFGYLIDPLTSIMSILITTVGIMVLIYSDNYMAHDQGYLRFFAYMSFFSTSMLGLVTSSNLIQIYIFWELVGLCSYLLIGFWFTRPVAANACQKAFVTNRVGDFGLLLGILGFYWITGSFEFRDLFEIFNNLSSNNEVNFLFVTLCAVLLFAGAVAKSAQFPLHVWLPDAMEGPTPISALIHAATMVAAGIFLVARLLPLFRVIPYIMYLISVIGIITVLLGATLALAQKDIKRGLAYSTMSQLGYMMLALGMGSYRSALFHLITHAYSKALLFLGSGSIIHSMETIVGYSPAKSQNMGLMGGLRKHVPITQITFLLGTLSLCGIPPLACFWSKDEILNDSWLYSPIFAIIAWATAGLTAFYMFRIYLLTFEGHLNVHFQNYGGKQKTPFYSISLWGKKGVKKNSYLLTMNNNESTYFFSKTKYPIDKNGRKMTRPFMTIAHFEHKTVYSYPYESDNTMLFPIFVLGLFTLFVGSIGIPFNQEGVNLDILSKWLAPSINLLHQKSNNSMDWNEFLKDAVLSVSIAYFGIFLASFLYKPIYSSLKNFELINSFVKKGPKRILWDKIINGIYDWSYNRAYIDAFYTRFFVGGIRGLAEFIHFFDRRVIDGMTNGVGVISFIVGEGIKYIGGGRISSYLFLYLAYVSVFLLVYYLFFLTF.

16 helical membrane-spanning segments follow: residues 9 to 29, 40 to 60, 89 to 109, 125 to 145, 147 to 167, 185 to 205, 219 to 239, 258 to 278, 286 to 306, 327 to 347, 354 to 374, 396 to 416, 425 to 445, 543 to 563, 602 to 622, and 718 to 738; these read WIIPFIPLPVPMLIGAGLILF, WAFQSVLLLSIVMIFSIYLSI, IDPLTSIMSILITTVGIMVLI, FAYMSFFSTSMLGLVTSSNLI, IYIFWELVGLCSYLLIGFWFT, GDFGLLLGILGFYWITGSFEF, NEVNFLFVTLCAVLLFAGAVA, TPISALIHAATMVAAGIFLVA, VIPYIMYLISVIGIITVLLGA, LGYMMLALGMGSYRSALFHLI, ALLFLGSGSIIHSMETIVGYS, ITFLLGTLSLCGIPPLACFWS, WLYSPIFAIIAWATAGLTAFY, LFPIFVLGLFTLFVGSIGIPF, VLSVSIAYFGIFLASFLYKPI, and YLFLYLAYVSVFLLVYYLFFL.

This sequence belongs to the complex I subunit 5 family. As to quaternary structure, NDH is composed of at least 16 different subunits, 5 of which are encoded in the nucleus.

The protein resides in the plastid. It is found in the chloroplast thylakoid membrane. It catalyses the reaction a plastoquinone + NADH + (n+1) H(+)(in) = a plastoquinol + NAD(+) + n H(+)(out). It carries out the reaction a plastoquinone + NADPH + (n+1) H(+)(in) = a plastoquinol + NADP(+) + n H(+)(out). Functionally, NDH shuttles electrons from NAD(P)H:plastoquinone, via FMN and iron-sulfur (Fe-S) centers, to quinones in the photosynthetic chain and possibly in a chloroplast respiratory chain. The immediate electron acceptor for the enzyme in this species is believed to be plastoquinone. Couples the redox reaction to proton translocation, and thus conserves the redox energy in a proton gradient. This chain is NAD(P)H-quinone oxidoreductase subunit 5, chloroplastic (ndhF), found in Atropa belladonna (Belladonna).